Reading from the N-terminus, the 207-residue chain is Thymidylate kinase (207 aa).

7 to 14 (GCEGSGKS) is a binding site for ATP.

It belongs to the thymidylate kinase family.

It carries out the reaction dTMP + ATP = dTDP + ADP. Phosphorylation of dTMP to form dTDP in both de novo and salvage pathways of dTTP synthesis. This chain is Thymidylate kinase, found in Chlamydia felis (strain Fe/C-56) (Chlamydophila felis).